A 272-amino-acid chain; its full sequence is Acetylglutamate kinase (272 aa).

Substrate contacts are provided by residues 46–47 (GA), R68, and N166.

The protein belongs to the acetylglutamate kinase family. ArgB subfamily.

The protein localises to the cytoplasm. It catalyses the reaction N-acetyl-L-glutamate + ATP = N-acetyl-L-glutamyl 5-phosphate + ADP. It functions in the pathway amino-acid biosynthesis; L-arginine biosynthesis; N(2)-acetyl-L-ornithine from L-glutamate: step 2/4. Catalyzes the ATP-dependent phosphorylation of N-acetyl-L-glutamate. This chain is Acetylglutamate kinase, found in Dehalococcoides mccartyi (strain ATCC BAA-2100 / JCM 16839 / KCTC 5957 / BAV1).